The chain runs to 373 residues: MFRSTWNFLKRHKKKCIFLGTVLGGVYILGKYGQKKIREIQEREAAEYIAQARRQYHFESNQRTCNMTVLSMLPTLREALMQQLNSESLTALLKTRPSNKLEIWEDLKIISFTRSIVAVYSTCMLVVLLRVQLNIIGGYIYLDNAAVGKNGTTVLAPPDVQQQYLSSIQHLLGDGLTELITVIKQAVQKILGSVSLKHSLSLLDLEQKLKEIRDLVEQHKSSSWINNDGSKSLLCHYMMPDEETPLAVQACGLSPRDVTTIKLLNETRDMLESPDFSTVLNTCLSRGFSRLLDNMAEFFRPTEQDLQHGNSINSLSSVSLPLAKIIPIINGQIHSVCSETPSHFVQDLLMMEQVKDFAANVYEAFSTPQQLEK.

Topologically, residues 1–15 are cytoplasmic; the sequence is MFRSTWNFLKRHKKK. The segment at 1-45 is targeting to peroxisomes; sequence MFRSTWNFLKRHKKKCIFLGTVLGGVYILGKYGQKKIREIQEREA. A helical transmembrane segment spans residues 16–36; sequence CIFLGTVLGGVYILGKYGQKK. Residues 37–116 are Peroxisomal-facing; sequence IREIQEREAA…LKIISFTRSI (80 aa). The helical transmembrane segment at 117-140 threads the bilayer; it reads VAVYSTCMLVVLLRVQLNIIGGYI. The tract at residues 120-136 is interaction with PEX19; the sequence is YSTCMLVVLLRVQLNII. Over 141–373 the chain is Cytoplasmic; that stretch reads YLDNAAVGKN…AFSTPQQLEK (233 aa).

This sequence belongs to the peroxin-3 family. As to quaternary structure, interacts with PEX19.

The protein localises to the peroxisome membrane. Functionally, involved in peroxisome biosynthesis and integrity. Assembles membrane vesicles before the matrix proteins are translocated. As a docking factor for PEX19, is necessary for the import of peroxisomal membrane proteins in the peroxisomes. The polypeptide is Peroxisomal biogenesis factor 3 (PEX3) (Bos taurus (Bovine)).